Reading from the N-terminus, the 307-residue chain is Membrane protein insertase YidC 1 (307 aa).

The first 22 residues, 1–22 (MKSKKGLTLTITLGTLALFLSG), serve as a signal peptide directing secretion. Cysteine 23 carries N-palmitoyl cysteine lipidation. Cysteine 23 carries S-diacylglycerol cysteine lipidation. Transmembrane regions (helical) follow at residues 59–79 (YGWAIIGLTVIVRLVLLPMMI), 136–156 (GIGCLPLLIQLPIFSALYYAI), 177–197 (LILAILAFLSYLAQGYLSMIG), 205–225 (TMRLMLIMSPVMILFVSMSAP), and 226–246 (AGLGLYFFVGGLFACLQTLII). Residues 260–307 (ELKKHPIKTPTPTQPKPINATESKPSHPRPQNNAGRGRNAGKQQRHHK) are disordered.

Belongs to the OXA1/ALB3/YidC family. Type 2 subfamily.

It localises to the cell membrane. In terms of biological role, required for the insertion and/or proper folding and/or complex formation of integral membrane proteins into the membrane. Involved in integration of membrane proteins that insert both dependently and independently of the Sec translocase complex, as well as at least some lipoproteins. The sequence is that of Membrane protein insertase YidC 1 from Lactiplantibacillus plantarum (strain ATCC BAA-793 / NCIMB 8826 / WCFS1) (Lactobacillus plantarum).